Here is a 103-residue protein sequence, read N- to C-terminus: Large ribosomal subunit protein bL21 (103 aa).

Belongs to the bacterial ribosomal protein bL21 family. In terms of assembly, part of the 50S ribosomal subunit. Contacts protein L20.

This protein binds to 23S rRNA in the presence of protein L20. This chain is Large ribosomal subunit protein bL21, found in Acinetobacter baylyi (strain ATCC 33305 / BD413 / ADP1).